We begin with the raw amino-acid sequence, 491 residues long: NADH-quinone oxidoreductase subunit N 1 (491 aa).

The next 14 membrane-spanning stretches (helical) occupy residues 9-29 (IAAPLLALAAGALLILLLDLL), 38-58 (PMYVAAVGAVLVAGWYLVPLW), 76-96 (FAAVYGLVLLGAALLAILLSF), 104-124 (SGYLALLLWAAMGMVLLGGAG), 126-146 (LMVIFLGIELLSLALYVMIAF), 161-181 (FVLGSVAAAFLIFGFALIYGA), 211-231 (VGVGLAIVGLAFKMALVPFHI), 246-266 (AFMAIGTKAAAFAAMARLLVA), 276-296 (FLLPLSILAFASMMLGATVGI), 304-324 (LMAYSGIANAGYLIMAIPGLG), 329-349 (SAAAYYLAAYGFATMGVFAVV), 375-395 (VGVCLAVLFFGLIGVPPTGGF), 410-432 (AWIVLTGLILSTGISAYVYLKVI), and 461-481 (VVLAIATAGTLVLGVLPGPVS).

This sequence belongs to the complex I subunit 2 family. In terms of assembly, NDH-1 is composed of 14 different subunits. Subunits NuoA, H, J, K, L, M, N constitute the membrane sector of the complex.

Its subcellular location is the cell membrane. The enzyme catalyses a quinone + NADH + 5 H(+)(in) = a quinol + NAD(+) + 4 H(+)(out). Functionally, NDH-1 shuttles electrons from NADH, via FMN and iron-sulfur (Fe-S) centers, to quinones in the respiratory chain. The immediate electron acceptor for the enzyme in this species is believed to be a menaquinone. Couples the redox reaction to proton translocation (for every two electrons transferred, four hydrogen ions are translocated across the cytoplasmic membrane), and thus conserves the redox energy in a proton gradient. The chain is NADH-quinone oxidoreductase subunit N 1 from Symbiobacterium thermophilum (strain DSM 24528 / JCM 14929 / IAM 14863 / T).